The sequence spans 183 residues: Ribosome rescue factor SmrB (183 aa).

The Smr domain occupies 98–173; that stretch reads LDLHGLTQLQ…GDAALLVLIE (76 aa).

The protein belongs to the SmrB family. Associates with collided ribosomes, but not with correctly translating polysomes.

In terms of biological role, acts as a ribosome collision sensor. Detects stalled/collided disomes (pairs of ribosomes where the leading ribosome is stalled and a second ribosome has collided with it) and endonucleolytically cleaves mRNA at the 5' boundary of the stalled ribosome. Stalled/collided disomes form a new interface (primarily via the 30S subunits) that binds SmrB. Cleaved mRNA becomes available for tmRNA ligation, leading to ribosomal subunit dissociation and rescue of stalled ribosomes. This is Ribosome rescue factor SmrB from Escherichia coli O7:K1 (strain IAI39 / ExPEC).